The sequence spans 101 residues: uncharacterized protein (101 aa).

The signal sequence occupies residues 1 to 24; the sequence is MILMFRMNKGMSFITLLFSLALFS.

This is an uncharacterized protein from Haemophilus influenzae (strain ATCC 51907 / DSM 11121 / KW20 / Rd).